The primary structure comprises 213 residues: Heavy metal-binding protein HIP (213 aa).

Residues 80 to 213 (FKSHHVAFSA…MSTFTGFMLH (134 aa)) form the C1q domain.

As to expression, pallium, gill and liver.

It is found in the secreted. In terms of biological role, binds heavy metals. May function as a carrier of divalent cations in plasma. This Mytilus edulis (Blue mussel) protein is Heavy metal-binding protein HIP.